The following is a 338-amino-acid chain: Glycerol-3-phosphate dehydrogenase [NAD(P)+] (338 aa).

The NADPH site is built by Ser-14, Tyr-15, His-35, and Lys-109. Residues Lys-109, Gly-138, and Thr-140 each coordinate sn-glycerol 3-phosphate. Residue Ala-142 participates in NADPH binding. Positions 194, 247, 257, 258, and 259 each coordinate sn-glycerol 3-phosphate. Lys-194 acts as the Proton acceptor in catalysis. NADPH is bound at residue Arg-258. NADPH contacts are provided by Val-282 and Glu-284.

The protein belongs to the NAD-dependent glycerol-3-phosphate dehydrogenase family.

It localises to the cytoplasm. The enzyme catalyses sn-glycerol 3-phosphate + NAD(+) = dihydroxyacetone phosphate + NADH + H(+). It carries out the reaction sn-glycerol 3-phosphate + NADP(+) = dihydroxyacetone phosphate + NADPH + H(+). It functions in the pathway membrane lipid metabolism; glycerophospholipid metabolism. Its function is as follows. Catalyzes the reduction of the glycolytic intermediate dihydroxyacetone phosphate (DHAP) to sn-glycerol 3-phosphate (G3P), the key precursor for phospholipid synthesis. In Shewanella putrefaciens (strain CN-32 / ATCC BAA-453), this protein is Glycerol-3-phosphate dehydrogenase [NAD(P)+].